The sequence spans 632 residues: Maltase 1 (632 aa).

The segment covering 1 to 29 (MEEGERWREGHVYQRSSETRKPTNYDRPD) has biased composition (basic and acidic residues). The tract at residues 1–30 (MEEGERWREGHVYQRSSETRKPTNYDRPDS) is disordered. 2 N-linked (GlcNAc...) asparagine glycosylation sites follow: asparagine 179 and asparagine 212. The active-site Nucleophile is aspartate 280. An N-linked (GlcNAc...) asparagine glycan is attached at asparagine 333. The active-site Proton donor is the glutamate 348. Residues asparagine 461, asparagine 575, and asparagine 578 are each glycosylated (N-linked (GlcNAc...) asparagine).

It belongs to the glycosyl hydrolase 13 family.

The catalysed reaction is Hydrolysis of terminal, non-reducing (1-&gt;4)-linked alpha-D-glucose residues with release of alpha-D-glucose.. The chain is Maltase 1 (Mal-B1) from Drosophila virilis (Fruit fly).